Reading from the N-terminus, the 886-residue chain is DNA mismatch repair protein MutS (886 aa).

641–648 (GPNMAGKS) lines the ATP pocket.

The protein belongs to the DNA mismatch repair MutS family.

In terms of biological role, this protein is involved in the repair of mismatches in DNA. It is possible that it carries out the mismatch recognition step. This protein has a weak ATPase activity. The sequence is that of DNA mismatch repair protein MutS from Rickettsia felis (strain ATCC VR-1525 / URRWXCal2) (Rickettsia azadi).